Reading from the N-terminus, the 69-residue chain is DNA-directed RNA polymerase subunit omega (69 aa).

Belongs to the RNA polymerase subunit omega family. In terms of assembly, the RNAP catalytic core consists of 2 alpha, 1 beta, 1 beta' and 1 omega subunit. When a sigma factor is associated with the core the holoenzyme is formed, which can initiate transcription.

It carries out the reaction RNA(n) + a ribonucleoside 5'-triphosphate = RNA(n+1) + diphosphate. Promotes RNA polymerase assembly. Latches the N- and C-terminal regions of the beta' subunit thereby facilitating its interaction with the beta and alpha subunits. The chain is DNA-directed RNA polymerase subunit omega from Pediococcus pentosaceus (strain ATCC 25745 / CCUG 21536 / LMG 10740 / 183-1w).